The chain runs to 517 residues: Ribonuclease Y (517 aa).

The chain crosses the membrane as a helical span at residues 2 to 22 (EILVYIIIGIAIFILSLLVGI). In terms of domain architecture, KH spans 207–267 (TTSTVALPTD…LRREIAKRTL (61 aa)). An HD domain is found at 333 to 426 (VLEHSIEVAQ…VAASDALSAS (94 aa)).

The protein belongs to the RNase Y family.

The protein localises to the cell membrane. In terms of biological role, endoribonuclease that initiates mRNA decay. In Petrotoga mobilis (strain DSM 10674 / SJ95), this protein is Ribonuclease Y.